We begin with the raw amino-acid sequence, 344 residues long: Phosphoribosylformylglycinamidine cyclo-ligase (344 aa).

It belongs to the AIR synthase family.

It is found in the cytoplasm. The catalysed reaction is 2-formamido-N(1)-(5-O-phospho-beta-D-ribosyl)acetamidine + ATP = 5-amino-1-(5-phospho-beta-D-ribosyl)imidazole + ADP + phosphate + H(+). The protein operates within purine metabolism; IMP biosynthesis via de novo pathway; 5-amino-1-(5-phospho-D-ribosyl)imidazole from N(2)-formyl-N(1)-(5-phospho-D-ribosyl)glycinamide: step 2/2. This chain is Phosphoribosylformylglycinamidine cyclo-ligase, found in Exiguobacterium sibiricum (strain DSM 17290 / CCUG 55495 / CIP 109462 / JCM 13490 / 255-15).